The primary structure comprises 552 residues: Harmonin (552 aa).

An N-terminal domain region spans residues 1 to 86 (MDRKVAREFR…LTPRRSRKLK (86 aa)). 2 PDZ domains span residues 87-169 (EVRL…HIGL) and 211-293 (KVFI…AAAG). A mediates interaction with MYO7B region spans residues 194-552 (GVRGSLGSPG…KEYDDELTFF (359 aa)). The residue at position 219 (Ser-219) is a Phosphoserine. Residues 310–377 (RELQRQELLM…EKFKKQWEED (68 aa)) are a coiled coil. The disordered stretch occupies residues 401-427 (KPKYDQGVEPELEPADDLDGGTEEQGE). Acidic residues predominate over residues 408–427 (VEPELEPADDLDGGTEEQGE). In terms of domain architecture, PDZ 3 spans 452–537 (DVRLLRIKKE…QGGDWIDLVV (86 aa)).

In terms of assembly, part of the IMAC/intermicrovillar adhesion complex/intermicrovillar tip-link complex composed of ANKS4B, MYO7B, USH1C, CDHR2 and CDHR5. Part of a complex composed of USH1C, USH1G and MYO7A. Interacts with F-actin. Interacts with USH2A. Interacts with SLC4A7. Interacts (via PDZ1 domain) with the C-terminus of USHBP1. Interacts (via N-terminus and PDZ 2 domain) with CDH23. Interacts with USH1G. Interacts with MYO7B. Interacts with CDHR2 and CDHR5; may mediate their interaction with MYO7B at the microvilli tip. Interacts (via PDZ 1 domain) with ANKS4B. Interacts (via PDZ 1 domain) with DOCK4. In terms of tissue distribution, expressed in small intestine, colon, kidney, eye and weakly in pancreas. Expressed also in vestibule of the inner ear.

It is found in the cytoplasm. The protein localises to the cytosol. It localises to the cytoskeleton. Its subcellular location is the cell projection. The protein resides in the microvillus. Functionally, anchoring/scaffolding protein that is a part of the functional network formed by USH1C, USH1G, CDH23 and MYO7A that mediates mechanotransduction in cochlear hair cells. Required for normal development and maintenance of cochlear hair cell bundles. As part of the intermicrovillar adhesion complex/IMAC plays a role in brush border differentiation, controlling microvilli organization and length. Probably plays a central regulatory role in the assembly of the complex, recruiting CDHR2, CDHR5 and MYO7B to the microvilli tips. In Homo sapiens (Human), this protein is Harmonin (USH1C).